The primary structure comprises 1568 residues: Agglutinin-like protein 7 (1568 aa).

A signal peptide spans Met1–Ser18. Intrachain disulfides connect Cys74–Cys151, Cys97–Cys113, Cys206–Cys299, and Cys228–Cys257. ALS repeat units lie at residues Thr403–Pro434, Ile441–Pro471, Val476–Pro507, and Val512–Pro543. Disordered regions lie at residues Glu546–Ser662, Leu721–Thr743, and Val767–Thr832. Composition is skewed to low complexity over residues Ser547–Ser662, Leu721–Asp738, Ser768–Thr793, and Ser801–Glu824. Residue Asn559 is glycosylated (N-linked (GlcNAc...) asparagine). The N-linked (GlcNAc...) asparagine glycan is linked to Asn851. Disordered stretches follow at residues Val860–Glu1030 and Glu1046–Asp1097. The span at Glu872–Ser904 shows a compositional bias: low complexity. The span at Leu909–Thr918 shows a compositional bias: polar residues. Low complexity predominate over residues Ser919 to Asp945. A compositionally biased stretch (polar residues) spans Gly956–Thr992. Asn988 carries N-linked (GlcNAc...) asparagine glycosylation. Composition is skewed to low complexity over residues Ser993–Val1002 and Glu1009–Glu1030. Residues Glu1046–Pro1062 are compositionally biased toward polar residues. A compositionally biased stretch (low complexity) spans Ser1063 to Asp1077. N-linked (GlcNAc...) asparagine glycosylation is present at Asn1188. Disordered stretches follow at residues Leu1194–Leu1220 and Gly1271–Gly1305. Composition is skewed to polar residues over residues Leu1272–Ser1286 and Asp1294–Ser1303. The N-linked (GlcNAc...) asparagine glycan is linked to Asn1284. The GPI-anchor amidated serine moiety is linked to residue Ser1548. Residues Gly1549–Phe1568 constitute a propeptide, removed in mature form.

This sequence belongs to the ALS family. In terms of processing, the GPI-anchor is attached to the protein in the endoplasmic reticulum and serves to target the protein to the cell surface. There, the glucosamine-inositol phospholipid moiety is cleaved off and the GPI-modified mannoprotein is covalently attached via its lipidless GPI glycan remnant to the 1,6-beta-glucan of the outer cell wall layer.

The protein localises to the cell membrane. It localises to the secreted. It is found in the cell wall. Its function is as follows. Cell surface adhesion protein which mediates both yeast-to-host tissue adherence and yeast aggregation. Plays an important role in the pathogenesis of C.albicans infections. This is Agglutinin-like protein 7 (ALS7) from Candida albicans (strain SC5314 / ATCC MYA-2876) (Yeast).